An 877-amino-acid polypeptide reads, in one-letter code: Probable Ras GTPase-activating-like protein ngap (877 aa).

In terms of domain architecture, C2 spans 72 to 218; it reads TPSATYESLI…KDQKERELWF (147 aa). Residues 350-456 are disordered; it reads SDDGDISGLK…ETINLSSSIN (107 aa). The segment covering 389–409 has biased composition (low complexity); the sequence is TTATTTPSSTPSTPISPSSQS. A compositionally biased stretch (polar residues) spans 410–425; it reads NNIKTPDSKTRSSSNA. 2 stretches are compositionally biased toward low complexity: residues 426–438 and 447–456; these read STNTPQTTPKSTG and ETINLSSSIN. Residues 591–802 enclose the Ras-GAP domain; the sequence is GKCLYLLKSL…ENMKSFINTL (212 aa). A coiled-coil region spans residues 820-848; the sequence is LEKELACLYRHLIKQRQDMAEEMESTESE.

Functionally, may function as a Ras GTPase-activating protein. The protein is Probable Ras GTPase-activating-like protein ngap (ngap) of Dictyostelium discoideum (Social amoeba).